The sequence spans 388 residues: Deoxyguanosinetriphosphate triphosphohydrolase-like protein (388 aa).

The segment at 1–32 (MSVGMAAPRAPYSCDPDRSRGRLFAEPPSRTR) is disordered. The region spanning 69 to 205 (RLTHSLEVAQ…AALADDIAYD (137 aa)) is the HD domain.

The protein belongs to the dGTPase family. Type 2 subfamily.

In Bradyrhizobium sp. (strain ORS 278), this protein is Deoxyguanosinetriphosphate triphosphohydrolase-like protein.